Consider the following 594-residue polypeptide: Segmentation polarity homeobox protein engrailed (594 aa).

7 disordered regions span residues 1–64 (MALE…TRDE), 76–127 (IKQE…PASI), 141–164 (KATA…ISPG), 198–217 (HYYQ…PQRA), 231–299 (ISKS…PTGS), 387–458 (AGTG…GSEN), and 474–501 (DRPS…RPRT). Positions 22-60 (SQSPTSTTTVTMATASPVPACTTTTTTTSTSGASAASSP) are enriched in low complexity. The span at 92 to 112 (PHHHQHPHHHQLPHHPHHQHH) shows a compositional bias: basic residues. The segment covering 151–164 (HPQPPAIREPISPG) has biased composition (pro residues). Over residues 237-247 (LCSSNGSSSAT) the composition is skewed to polar residues. 2 stretches are compositionally biased toward low complexity: residues 278 to 299 (ASPS…PTGS) and 387 to 402 (AGTG…ANGA). Polar residues-rich tracts occupy residues 426 to 436 (SSETNGSSSQD) and 448 to 458 (ETSSTKDGSEN). Residues 487–499 (QPKEKGDSEEKRP) are compositionally biased toward basic and acidic residues. The homeobox DNA-binding region spans 496 to 555 (EKRPRTAFSNAQLQRLKNEFNENRYLTEKRRQTLSAELGLNEAQIKIWFQNKRAKIKKSS).

Belongs to the engrailed homeobox family.

The protein resides in the nucleus. In terms of biological role, this protein specifies the body segmentation pattern. It is required for the development of the central nervous system. Transcriptional regulator that repress activated promoters. The chain is Segmentation polarity homeobox protein engrailed (en) from Anopheles gambiae (African malaria mosquito).